Reading from the N-terminus, the 209-residue chain is LWLGTAGMFLGMLYFIARGWGETDGRRQKFYIATILITAIAFVNYLAMALGFGLTFIEFGGEQHPIYWARYTDWLFTTPLLLYDLGLLAGADRNTIYSLVSLDVLMIGTGVVATLSAGSGVLSAGAERLVWWGISTAFLLVLLYFLFSSLSGRVANLPSDTRSTFKTLRNLVTVVWLVYPVWWLVGSEGLGLVGIGIETAGFMVIDLVA.

Residues 1 to 17 traverse the membrane as a helical segment; sequence LWLGTAGMFLGMLYFIA. The Cytoplasmic portion of the chain corresponds to 18-31; that stretch reads RGWGETDGRRQKFY. The chain crosses the membrane as a helical span at residues 32-50; the sequence is IATILITAIAFVNYLAMAL. Over 51–66 the chain is Extracellular; sequence GFGLTFIEFGGEQHPI. A helical membrane pass occupies residues 67–84; the sequence is YWARYTDWLFTTPLLLYD. The Cytoplasmic segment spans residues 85–95; it reads LGLLAGADRNT. The chain crosses the membrane as a helical span at residues 96–115; sequence IYSLVSLDVLMIGTGVVATL. Topologically, residues 116–128 are extracellular; the sequence is SAGSGVLSAGAER. A helical membrane pass occupies residues 129–148; sequence LVWWGISTAFLLVLLYFLFS. The Cytoplasmic segment spans residues 149–166; sequence SLSGRVANLPSDTRSTFK. The helical transmembrane segment at 167-185 threads the bilayer; it reads TLRNLVTVVWLVYPVWWLV. At 186–197 the chain is on the extracellular side; it reads GSEGLGLVGIGI. The chain crosses the membrane as a helical span at residues 198–209; the sequence is ETAGFMVIDLVA.

Belongs to the archaeal/bacterial/fungal opsin family.

It is found in the cell membrane. Light-driven proton pump. The sequence is that of Bacteriorhodopsin (bop) from Halobacterium halobium (strain shark).